The sequence spans 361 residues: Aurora kinase B-A (361 aa).

Positions 93 to 343 (FDIGRPLGKG…LKGVMEHPWV (251 aa)) constitute a Protein kinase domain. ATP-binding positions include 99-107 (LGKGKFGNV) and Lys122. Asp216 functions as the Proton acceptor in the catalytic mechanism.

The protein belongs to the protein kinase superfamily. Ser/Thr protein kinase family. Aurora subfamily. In terms of assembly, component of the CPC at least composed of survivin/birc5, incenp, cdca8/borealin and/or cdca9/dasra-A, and aurkb/aurora-B. Interacts directly (via N-terminus and kinase domain) with incenp (via C terminus), and may weakly interact (via N-terminus) with birc5.1 to stabilize the complex. Interacts with mtus1. Requires Mg(2+) as cofactor. Phosphorylated, stimulates kinase activity.

The protein resides in the nucleus. Its subcellular location is the chromosome. It catalyses the reaction L-seryl-[protein] + ATP = O-phospho-L-seryl-[protein] + ADP + H(+). The catalysed reaction is L-threonyl-[protein] + ATP = O-phospho-L-threonyl-[protein] + ADP + H(+). Its activity is regulated as follows. Kinase activity is stimulated by both birc5/survivin-binding and cell-cycle specific phosphorylation. Serine/threonine-protein kinase component of the chromosomal passenger complex (CPC), a complex that acts as a key regulator of mitosis. The CPC complex has essential functions at the centromere in ensuring correct chromosome alignment and segregation and is required for chromatin-induced microtubule stabilization and spindle assembly. Involved in the bipolar attachment of spindle microtubules to kinetochores and is a key regulator for the onset of cytokinesis during mitosis. Required for central/midzone spindle assembly and cleavage furrow formation. Key component of the cytokinesis checkpoint, a process required to delay abscission to prevent both premature resolution of intercellular chromosome bridges and accumulation of DNA damage. Phosphorylates 'Ser-10' of histone H3 during mitosis. This is Aurora kinase B-A (aurkb-a) from Xenopus laevis (African clawed frog).